The following is a 534-amino-acid chain: Lysophosphatidylcholine acyltransferase 1 (534 aa).

The interval 1-25 (MRLRGRGPRAAPSSSSGAGDARRLA) is disordered. At 1-57 (MRLRGRGPRAAPSSSSGAGDARRLAPPGRNPFVHELRLSALQKAQVAFMTLTLFPIR) the chain is on the cytoplasmic side. Residues 8–19 (PRAAPSSSSGAG) are compositionally biased toward low complexity. Residues 58-78 (LLFAAFMMLLAWPFALLASLG) traverse the membrane as a helical; Signal-anchor for type II membrane protein segment. Residues 79–534 (PPDKEPEQPL…GRKNSCKKAD (456 aa)) are Lumenal-facing. The HXXXXD motif signature appears at 135–140 (HSSYFD). 2 EF-hand domains span residues 379-414 (PVSD…VCRP) and 451-486 (VSEL…YPDY). Ca(2+) contacts are provided by Asp-392, Ser-394, Glu-398, and Glu-403. The Di-lysine motif motif lies at 531–534 (KKAD).

This sequence belongs to the 1-acyl-sn-glycerol-3-phosphate acyltransferase family. As to expression, predominantly expressed in lung where it is enriched in alveolar type II cells. Expressed at lower levels in spleen and brain. Also detected in erythroleukemic cells and reticulocytes. Weakly or not expressed in other tissues.

Its subcellular location is the endoplasmic reticulum membrane. It localises to the golgi apparatus membrane. The protein localises to the cell membrane. The protein resides in the lipid droplet. The enzyme catalyses a 1-acyl-sn-glycero-3-phosphocholine + an acyl-CoA = a 1,2-diacyl-sn-glycero-3-phosphocholine + CoA. It carries out the reaction a 1-O-alkyl-sn-glycero-3-phosphocholine + acetyl-CoA = a 1-O-alkyl-2-acetyl-sn-glycero-3-phosphocholine + CoA. It catalyses the reaction a 1-acyl-sn-glycero-3-phosphate + an acyl-CoA = a 1,2-diacyl-sn-glycero-3-phosphate + CoA. The catalysed reaction is a 1-O-(1Z-alkenyl)-sn-glycero-3-phosphocholine + an acyl-CoA = a 1-O-(1Z-alkenyl)-2-acyl-sn-glycero-3-phosphocholine + CoA. The enzyme catalyses 1-acyl-sn-glycero-3-phospho-(1'-sn-glycerol) + an acyl-CoA = a 1,2-diacyl-sn-glycero-3-phospho-(1'-sn-glycerol) + CoA. It carries out the reaction 1-hexadecanoyl-sn-glycero-3-phosphocholine + hexadecanoyl-CoA = 1,2-dihexadecanoyl-sn-glycero-3-phosphocholine + CoA. It catalyses the reaction 1-O-hexadecyl-sn-glycero-3-phosphocholine + hexadecanoyl-CoA = 1-O-hexadecyl-2-hexadecanoyl-sn-glycero-3-phosphocholine + CoA. The catalysed reaction is a 1-O-(1Z-alkenyl)-sn-glycero-3-phosphocholine + hexadecanoyl-CoA = 1-O-(1Z)-alkenyl-2-hexadecanoyl-sn-glycero-3-phosphocholine + CoA. The enzyme catalyses 1-hexadecanoyl-sn-glycero-3-phospho-(1'-sn-glycerol) + hexadecanoyl-CoA = 1,2-dihexadecanoyl-sn-glycero-3-phospho-(1'-sn-glycerol) + CoA. It carries out the reaction 1-dodecanoyl-sn-glycero-3-phosphocholine + hexadecanoyl-CoA = 1-dodecanoyl-2-hexadecanoyl-sn-glycero-3-phosphocholine + CoA. It catalyses the reaction 1-tetradecanoyl-sn-glycero-3-phosphocholine + hexadecanoyl-CoA = 1-tetradecanoyl-2-hexadecanoyl-sn-glycero-3-phosphocholine + CoA. The catalysed reaction is 1-O-octadecyl-sn-glycero-3-phosphocholine + hexadecanoyl-CoA = 1-O-octadecyl-2-hexadecanoyl-sn-glycero-3-phosphocholine + CoA. The enzyme catalyses 1-octadecanoyl-sn-glycero-3-phosphocholine + hexadecanoyl-CoA = 1-octadecanoyl-2-hexadecanoyl-sn-glycero-3-phosphocholine + CoA. It carries out the reaction 1-(9Z-octadecenoyl)-sn-glycero-3-phosphocholine + hexadecanoyl-CoA = 1-(9Z-octadecenoyl)-2-hexadecanoyl-sn-glycero-3-phosphocholine + CoA. It catalyses the reaction 1-eicosanoyl-sn-glycero-3-phosphocholine + hexadecanoyl-CoA = 1-eicosanoyl-2-hexadecanoyl-sn-glycero-3-phosphocholine + CoA. The catalysed reaction is hexanoyl-CoA + 1-hexadecanoyl-sn-glycero-3-phosphocholine = 1-hexadecanoyl-2-hexanoyl-sn-glycero-3-phosphocholine + CoA. The enzyme catalyses octanoyl-CoA + 1-hexadecanoyl-sn-glycero-3-phosphocholine = 1-hexadecanoyl-2-octanoyl-sn-glycero-3-phosphocholine + CoA. It carries out the reaction decanoyl-CoA + 1-hexadecanoyl-sn-glycero-3-phosphocholine = 1-hexadecanoyl-2-decanoyl-sn-glycero-3-phosphocholine + CoA. It catalyses the reaction dodecanoyl-CoA + 1-hexadecanoyl-sn-glycero-3-phosphocholine = 1-hexadecanoyl-2-dodecanoyl-sn-glycero-3-phosphocholine + CoA. The catalysed reaction is tetradecanoyl-CoA + 1-hexadecanoyl-sn-glycero-3-phosphocholine = 1-hexadecanoyl-2-tetradecanoyl-sn-glycero-3-phosphocholine + CoA. The enzyme catalyses 1-hexadecanoyl-sn-glycero-3-phosphocholine + (9Z)-octadecenoyl-CoA = 1-hexadecanoyl-2-(9Z-octadecenoyl)-sn-glycero-3-phosphocholine + CoA. It carries out the reaction (9Z,12Z)-octadecadienoyl-CoA + 1-hexadecanoyl-sn-glycero-3-phosphocholine = 1-hexadecanoyl-2-(9Z,12Z-octadecadienoyl)-sn-glycero-3-phosphocholine + CoA. It catalyses the reaction (4Z,7Z,10Z,13Z,16Z,19Z)-docosahexaenoyl-CoA + 1-hexadecanoyl-sn-glycero-3-phosphocholine = 1-hexadecanoyl-2-(4Z,7Z,10Z,13Z,16Z,19Z-docosahexaenoyl)-sn-glycero-3-phosphocholine + CoA. The catalysed reaction is 1-hexadecanoyl-sn-glycero-3-phosphocholine + acetyl-CoA = 1-hexadecanoyl-2-acetyl-sn-glycero-3-phosphocholine + CoA. The enzyme catalyses eicosanoyl-CoA + 1-hexadecanoyl-sn-glycero-3-phosphocholine = 1-hexadecanoyl-2-eicosanoyl-sn-glycero-3-phosphocholine + CoA. It carries out the reaction 1-O-hexadecyl-sn-glycero-3-phosphocholine + acetyl-CoA = 1-O-hexadecyl-2-acetyl-sn-glycero-3-phosphocholine + CoA. It catalyses the reaction a 1-acyl-sn-glycero-3-phosphocholine + hexadecanoyl-CoA = 1-acyl-2-hexadecanoyl-sn-glycero-3-phosphocholine + CoA. The catalysed reaction is a 1-acyl-sn-glycero-3-phosphate + hexadecanoyl-CoA = 1-acyl-2-hexadecanoyl-sn-glycero-3-phosphate + CoA. The enzyme catalyses 1-acyl-sn-glycero-3-phospho-(1'-sn-glycerol) + hexadecanoyl-CoA = 1-acyl-2-hexadecanoyl-sn-glycero-3-phospho-(1'-sn-glycerol) + CoA. It participates in lipid metabolism; phospholipid metabolism. Not activated by inflammatory stimulation. Inhibited by Cu(2+), Fe(2+), Ca(2+) and Mg(2+). Activity is not affected by Co(2+) or Mn(2+). Exhibits both acyltransferase and acetyltransferase activities. Activity is calcium-independent. Catalyzes the conversion of lysophosphatidylcholine (1-acyl-sn-glycero-3-phosphocholine or LPC) into phosphatidylcholine (1,2-diacyl-sn-glycero-3-phosphocholine or PC). Catalyzes the conversion 1-acyl-sn-glycerol-3-phosphate (lysophosphatidic acid or LPA) into 1,2-diacyl-sn-glycerol-3-phosphate (phosphatidic acid or PA) by incorporating an acyl moiety at the sn-2 position of the glycerol backbone. Displays a clear preference for saturated fatty acyl-CoAs, and 1-myristoyl or 1-palmitoyl LPC as acyl donors and acceptors, respectively. Involved in platelet-activating factor (PAF) biosynthesis by catalyzing the conversion of the PAF precursor, 1-O-alkyl-sn-glycero-3-phosphocholine (lyso-PAF) into 1-O-alkyl-2-acetyl-sn-glycero-3-phosphocholine (PAF). May synthesize phosphatidylcholine in pulmonary surfactant, thereby playing a pivotal role in respiratory physiology. Involved in the regulation of lipid droplet number and size. This is Lysophosphatidylcholine acyltransferase 1 (Lpcat1) from Mus musculus (Mouse).